A 1954-amino-acid chain; its full sequence is Chromodomain-helicase-DNA-binding protein 5 (1954 aa).

Disordered stretches follow at residues 1–134 and 225–338; these read MRGP…PKSS and PLAV…GDGY. 2 stretches are compositionally biased toward acidic residues: residues 17–37 and 72–90; these read EEMENEDEMSEEEDGGLEAFD and NDELSENEEDLEEKSESEG. A compositionally biased stretch (basic residues) spans 96 to 115; the sequence is NKKKKKKLKDKKEKKAKRKK. A compositionally biased stretch (pro residues) spans 227-237; the sequence is AVSPPQVPQPV. Over residues 251 to 272 the composition is skewed to basic residues; the sequence is GVRKKIKGSKDGKKKGKGKKTA. The span at 291-301 shows a compositional bias: acidic residues; that stretch reads SEEDEREESDF. Residues 321–330 show a composition bias toward basic residues; it reads KKSKRRRKKK. 2 consecutive PHD-type zinc fingers follow at residues 343–390 and 416–463; these read QDYC…CEKE and MEFC…CTCP. A histone-binding region spans residues 343–653; the sequence is QDYCEVCQQG…HRELMLGEDT (311 aa). Positions 497–554 constitute a Chromo 1 domain; that stretch reads LPPPKPLEGIPEREFFVKWAGLSYWHCSWVKELQLELYHTVMYRNYQRKNDMDEPPPF. Positions 549–571 are disordered; it reads DEPPPFDYGSGDEDGKSEKRKNK. Residues 561–571 are compositionally biased toward basic and acidic residues; that stretch reads EDGKSEKRKNK. The region spanning 592–653 is the Chromo 2 domain; the sequence is MMIHRILNHS…HRELMLGEDT (62 aa). One can recognise a Helicase ATP-binding domain in the interval 712–896; it reads RFSWAQGTDT…FHLLNFLTPE (185 aa). 725–732 is a binding site for ATP; sequence DEMGLGKT. Positions 847 to 850 match the DEAH box motif; sequence DEAH. Residues 1028 to 1193 enclose the Helicase C-terminal domain; sequence LLQKMLKKLR…MTKQELDDIL (166 aa). 5 disordered regions span residues 1209-1253, 1351-1411, 1524-1564, 1597-1640, and 1658-1696; these read MSQG…EDSS, YNDA…LPPL, YSTP…APLG, AALD…REEV, and SRGDSSELRPDDTKAEEKEPIETQQNGDKEEDDEGKKED. Acidic residues-rich tracts occupy residues 1355-1366 and 1376-1385; these read SQEDQEWQDELS and SEDEDEDFEE. Gln-1390 carries the N5-methylglutamine modification. Ser-1554 carries the phosphoserine modification. Over residues 1554–1564 the composition is skewed to low complexity; sequence SPAHLLPAPLG. Composition is skewed to basic and acidic residues over residues 1600–1627 and 1658–1678; these read DRVESEDKHESPASKERAREERPEETEK and SRGDSSELRPDDTKAEEKEPI.

It belongs to the SNF2/RAD54 helicase family. Component of the nucleosome remodeling and deacetylase (NuRD) repressor complex, composed of core proteins MTA1, MTA2, MTA3, RBBP4, RBBP7, HDAC1, HDAC2, MBD2, MBD3, and peripherally associated proteins CDK2AP1, CDK2AP2, GATAD2A, GATAD2B, CHD3, CHD4 and CHD5. The exact stoichiometry of the NuRD complex is unknown, and some subunits such as MBD2 and MBD3, GATAD2A and GATAD2B, and CHD3, CHD4 and CHD5 define mutually exclusive NuRD complexes. Interacts with HDAC2. Methylated at Gln-1390 by N6AMT1. Preferentially expressed in total brain, fetal brain, and cerebellum. It is also moderately expressed in the adrenal gland and detected in testis.

The protein resides in the nucleus. It is found in the chromosome. The catalysed reaction is ATP + H2O = ADP + phosphate + H(+). ATP-dependent chromatin-remodeling factor that binds DNA through histones and regulates gene transcription. May specifically recognize and bind trimethylated 'Lys-27' (H3K27me3) and non-methylated 'Lys-4' of histone H3. Acts as a component of the histone deacetylase NuRD complex which participates in the remodeling of chromatin. Plays a role in the development of the nervous system by activating the expression of genes promoting neuron terminal differentiation. In parallel, it may also positively regulate the trimethylation of histone H3 at 'Lys-27' thereby specifically repressing genes that promote the differentiation into non-neuronal cell lineages. Regulates the expression of genes involved in cell proliferation and differentiation. Downstream activated genes may include CDKN2A that positively regulates the p53/TP53 pathway, which in turn, prevents cell proliferation. In spermatogenesis, it probably regulates histone hyperacetylation and the replacement of histones by transition proteins in chromatin, a crucial step in the condensation of spermatid chromatin and the production of functional spermatozoa. In Homo sapiens (Human), this protein is Chromodomain-helicase-DNA-binding protein 5.